A 315-amino-acid chain; its full sequence is Methionyl-tRNA formyltransferase (315 aa).

113–116 (SLLP) contacts (6S)-5,6,7,8-tetrahydrofolate.

The protein belongs to the Fmt family.

It carries out the reaction L-methionyl-tRNA(fMet) + (6R)-10-formyltetrahydrofolate = N-formyl-L-methionyl-tRNA(fMet) + (6S)-5,6,7,8-tetrahydrofolate + H(+). Attaches a formyl group to the free amino group of methionyl-tRNA(fMet). The formyl group appears to play a dual role in the initiator identity of N-formylmethionyl-tRNA by promoting its recognition by IF2 and preventing the misappropriation of this tRNA by the elongation apparatus. The protein is Methionyl-tRNA formyltransferase of Shigella boydii serotype 18 (strain CDC 3083-94 / BS512).